The chain runs to 540 residues: Cystathionine gamma-synthase 1, chloroplastic (540 aa).

Residues 1 to 78 (MAVSSCARAF…RNCSNIGVAQ (78 aa)) constitute a chloroplast transit peptide. Pyridoxal 5'-phosphate-binding residues include Tyr203, Arg205, Gly233, Met234, Tyr258, Ser353, and Thr355. Position 356 is an N6-(pyridoxal phosphate)lysine (Lys356).

The protein belongs to the trans-sulfuration enzymes family. As to quaternary structure, forms homotetramers composed of 2 homodimers. It depends on pyridoxal 5'-phosphate as a cofactor.

The protein localises to the plastid. Its subcellular location is the chloroplast. It carries out the reaction O-phospho-L-homoserine + L-cysteine = L,L-cystathionine + phosphate. The enzyme catalyses O-succinyl-L-homoserine + L-cysteine = L,L-cystathionine + succinate + H(+). The protein operates within amino-acid biosynthesis; L-methionine biosynthesis via de novo pathway; L-cystathionine from O-succinyl-L-homoserine: step 1/1. Irreversibly inactivated by DL-propargylglycine. In terms of biological role, catalyzes the first committed step of methionine (Met) biosynthesis. Catalyzes the formation of L-cystathionine from homoserine esters and L-cysteine, via a gamma-replacement reaction. The sequence is that of Cystathionine gamma-synthase 1, chloroplastic from Nicotiana tabacum (Common tobacco).